The sequence spans 552 residues: Protein FAM234A (552 aa).

A disordered region spans residues 1–40; that stretch reads MMDDKDLEAEIHPLKNEDKKSQENLGNLPKTEDNLKNKPV. Residues 1–49 are Cytoplasmic-facing; sequence MMDDKDLEAEIHPLKNEDKKSQENLGNLPKTEDNLKNKPVPSRLSRCRT. Over residues 8-22 the composition is skewed to basic and acidic residues; it reads EAEIHPLKNEDKKSQ. Phosphoserine is present on Ser21. The helical; Signal-anchor for type II membrane protein transmembrane segment at 50–70 threads the bilayer; it reads VAFFLSLFICLFVVFVLSFII. Residues 71 to 552 lie on the Extracellular side of the membrane; sequence PCPDRPSSED…FSRLRYRSEV (482 aa). Residues Asn116, Asn119, Asn314, and Asn473 are each glycosylated (N-linked (GlcNAc...) asparagine).

Belongs to the FAM234 family.

It localises to the membrane. The sequence is that of Protein FAM234A (Fam234a) from Rattus norvegicus (Rat).